Consider the following 462-residue polypeptide: Glycine--tRNA ligase (462 aa).

Substrate contacts are provided by arginine 100 and glutamate 174. ATP contacts are provided by residues 206 to 208 (RNE), 216 to 221 (FRTREF), 290 to 291 (EL), and 334 to 337 (GADR). 221–225 (FEQME) is a substrate binding site. 330–334 (EPSLG) lines the substrate pocket.

It belongs to the class-II aminoacyl-tRNA synthetase family. In terms of assembly, homodimer.

It localises to the cytoplasm. It catalyses the reaction tRNA(Gly) + glycine + ATP = glycyl-tRNA(Gly) + AMP + diphosphate. Catalyzes the attachment of glycine to tRNA(Gly). In Alkaliphilus metalliredigens (strain QYMF), this protein is Glycine--tRNA ligase.